Reading from the N-terminus, the 391-residue chain is 3-ketoacyl-CoA thiolase (391 aa).

Cysteine 95 serves as the catalytic Acyl-thioester intermediate. Catalysis depends on proton acceptor residues histidine 347 and cysteine 377.

This sequence belongs to the thiolase-like superfamily. Thiolase family. As to quaternary structure, heterotetramer of two alpha chains (FadB) and two beta chains (FadA).

It is found in the cytoplasm. It carries out the reaction an acyl-CoA + acetyl-CoA = a 3-oxoacyl-CoA + CoA. The protein operates within lipid metabolism; fatty acid beta-oxidation. Functionally, catalyzes the final step of fatty acid oxidation in which acetyl-CoA is released and the CoA ester of a fatty acid two carbons shorter is formed. This is 3-ketoacyl-CoA thiolase from Pseudomonas syringae pv. tomato (strain ATCC BAA-871 / DC3000).